The primary structure comprises 587 residues: MTECKAEVTPSASNGHRVFSYTLESHTAAAFAIMNELRRERQLCDVTLRVRYCPLDTHVDFVAHKVVLASSSPVFRAMFTNGLKECGMEVVPIEGIHPKVMGRLIEFAYTASISVGEKCVIHVMNGAVMYQIDSVVQACCDFLVEQLDPSNAIGIASFAEQIGCTELHQKAREYIYMNFSQVATQEEFFTLSHCQLVTLISRDELNVRCESEVFHACVAWVQYDREERRPYVQALLQAVRCHSLTPHFLQRQLEHFEWDAQSKDYLSQIFRDLTLHKPTKVIPLRTPKVPQLIYTVGGYFRQSLSFLEAFNPCSGAWLRLADLQVPRSGLAACVISGLLYAVGGRNNGPDGNMDSHTLDCYNPMNNCWRPCAHMSVPRNRIGVGVIDGMIYAVGGSHGCTHHNSVERYDPERDSWQLVSPMLTRRIGVGVAVINRLLYAVGGFDGTHRLSSAECYNPERDEWRSIAAMNTVRSGAGVCALGNYIYVMGGYDGTNQLNTVERYDVEKDSWSFSASMRHRRSALGVTTHHGRIYVLGGYDGNTFLDSVECFDPETDSWTEVTHMKSGRSGVGVAVTMEPCHKELIPCQC.

The BTB domain occupies 44–117 (CDVTLRVRYC…AYTASISVGE (74 aa)). The 101-residue stretch at 153–253 (IGIASFAEQI…LTPHFLQRQL (101 aa)) folds into the BACK domain. Kelch repeat units lie at residues 292-337 (LIYT…VISG), 338-388 (LLYA…VIDG), 389-435 (MIYA…VINR), 436-482 (LLYA…ALGN), 484-529 (IYVM…THHG), and 530-576 (RIYV…VTME).

It belongs to the KEAP1 family. Homodimer and heterodimer; heterodimerizes with keap1a. Component of the BCR(KEAP1) E3 ubiquitin ligase complex, at least composed of 2 molecules of cul3, 2 molecules of keap1 (keap1a and/or keap1b), and rbx1. Interacts with nfe2l2/nrf2; the interaction is direct. Post-translationally, non-enzymatic covalent modifications of reactive cysteines by electrophile metabolites inactivate the BCR(KEAP1) complex. As to expression, widely expressed.

It is found in the cytoplasm. It localises to the nucleus. Its pathway is protein modification; protein ubiquitination. Its activity is regulated as follows. Ubiquitin ligase activity of the BCR(KEAP1) complex is inhibited by oxidative stress and electrophile metabolites such as sulforaphane. Electrophile metabolites react with reactive cysteine residues in keap1 and trigger non-enzymatic covalent modifications of these cysteine residues, leading to inactivate the ubiquitin ligase activity of the BCR(KEAP1) complex. Its function is as follows. Substrate-specific adapter of a BCR (BTB-CUL3-RBX1) E3 ubiquitin ligase complex that regulates the response to oxidative stress by targeting nfe2l2/nrf2 for ubiquitination. Keap1 acts as a key sensor of oxidative and electrophilic stress: in normal conditions, the BCR(KEAP1) complex mediates ubiquitination and degradation of nfe2l2/nrf2, a transcription factor regulating expression of many cytoprotective genes. In response to oxidative stress, different electrophile metabolites trigger non-enzymatic covalent modifications of highly reactive cysteine residues in KEAP1, leading to inactivate the ubiquitin ligase activity of the BCR(KEAP1) complex, promoting nfe2l2/nrf2 nuclear accumulation and expression of phase II detoxifying enzymes. The chain is Kelch-like ECH-associated protein 1B from Danio rerio (Zebrafish).